A 285-amino-acid polypeptide reads, in one-letter code: Undecaprenyl-diphosphatase 2 (285 aa).

8 helical membrane-spanning segments follow: residues 5–25, 47–67, 86–106, 122–142, 156–176, 198–218, 235–255, and 265–285; these read MDLL…LLPV, MTFL…VYFW, WYVL…QSLI, LFSN…LIIL, LPSA…RGFS, FSFA…LVRL, SLLL…LLAL, and GRWY…LTLA.

It belongs to the UppP family.

Its subcellular location is the cell inner membrane. The catalysed reaction is di-trans,octa-cis-undecaprenyl diphosphate + H2O = di-trans,octa-cis-undecaprenyl phosphate + phosphate + H(+). In terms of biological role, catalyzes the dephosphorylation of undecaprenyl diphosphate (UPP). Confers resistance to bacitracin. This Acinetobacter baylyi (strain ATCC 33305 / BD413 / ADP1) protein is Undecaprenyl-diphosphatase 2.